A 343-amino-acid chain; its full sequence is ATPase GET3 (343 aa).

32-39 (KGGVGKTT) is an ATP binding site. The active site involves aspartate 61. Positions 245 and 272 each coordinate ATP. Zn(2+)-binding residues include cysteine 283 and cysteine 286.

The protein belongs to the arsA ATPase family. As to quaternary structure, homodimer.

It is found in the cytoplasm. It localises to the endoplasmic reticulum. In terms of biological role, ATPase required for the post-translational delivery of tail-anchored (TA) proteins to the endoplasmic reticulum. Recognizes and selectively binds the transmembrane domain of TA proteins in the cytosol. This complex then targets to the endoplasmic reticulum by membrane-bound receptors, where the tail-anchored protein is released for insertion. This process is regulated by ATP binding and hydrolysis. ATP binding drives the homodimer towards the closed dimer state, facilitating recognition of newly synthesized TA membrane proteins. ATP hydrolysis is required for insertion. Subsequently, the homodimer reverts towards the open dimer state, lowering its affinity for the membrane-bound receptor, and returning it to the cytosol to initiate a new round of targeting. This is ATPase GET3 from Pyricularia oryzae (strain 70-15 / ATCC MYA-4617 / FGSC 8958) (Rice blast fungus).